The sequence spans 194 residues: Large ribosomal subunit protein bL9 (194 aa).

The protein belongs to the bacterial ribosomal protein bL9 family.

Binds to the 23S rRNA. The polypeptide is Large ribosomal subunit protein bL9 (Rhodopseudomonas palustris (strain BisA53)).